A 573-amino-acid chain; its full sequence is Urease subunit alpha (573 aa).

In terms of domain architecture, Urease spans 136 to 573 (GAIDCHVHLI…LPMAQRYFLF (438 aa)). Positions 141, 143, and 224 each coordinate Ni(2+). The residue at position 224 (Lys224) is an N6-carboxylysine. His226 lines the substrate pocket. His253 and His279 together coordinate Ni(2+). His327 serves as the catalytic Proton donor. Asp367 is a Ni(2+) binding site.

Belongs to the metallo-dependent hydrolases superfamily. Urease alpha subunit family. In terms of assembly, heterotrimer of UreA (gamma), UreB (beta) and UreC (alpha) subunits. Three heterotrimers associate to form the active enzyme. It depends on Ni cation as a cofactor. Post-translationally, carboxylation allows a single lysine to coordinate two nickel ions.

The protein localises to the cytoplasm. It carries out the reaction urea + 2 H2O + H(+) = hydrogencarbonate + 2 NH4(+). It participates in nitrogen metabolism; urea degradation; CO(2) and NH(3) from urea (urease route): step 1/1. The chain is Urease subunit alpha from Mycolicibacterium vanbaalenii (strain DSM 7251 / JCM 13017 / BCRC 16820 / KCTC 9966 / NRRL B-24157 / PYR-1) (Mycobacterium vanbaalenii).